The chain runs to 955 residues: 2-oxoglutarate dehydrogenase E1 component (955 aa).

Belongs to the alpha-ketoglutarate dehydrogenase family. As to quaternary structure, homodimer. Part of the 2-oxoglutarate dehydrogenase (OGDH) complex composed of E1 (2-oxoglutarate dehydrogenase), E2 (dihydrolipoamide succinyltransferase) and E3 (dihydrolipoamide dehydrogenase); the complex contains multiple copies of the three enzymatic components (E1, E2 and E3). Thiamine diphosphate serves as cofactor.

The catalysed reaction is N(6)-[(R)-lipoyl]-L-lysyl-[protein] + 2-oxoglutarate + H(+) = N(6)-[(R)-S(8)-succinyldihydrolipoyl]-L-lysyl-[protein] + CO2. In terms of biological role, E1 component of the 2-oxoglutarate dehydrogenase (OGDH) complex which catalyzes the decarboxylation of 2-oxoglutarate, the first step in the conversion of 2-oxoglutarate to succinyl-CoA and CO(2). The chain is 2-oxoglutarate dehydrogenase E1 component from Bacillus cereus (strain AH187).